Reading from the N-terminus, the 93-residue chain is Small ribosomal subunit protein bS20 (93 aa).

Belongs to the bacterial ribosomal protein bS20 family.

Its function is as follows. Binds directly to 16S ribosomal RNA. The chain is Small ribosomal subunit protein bS20 from Dictyoglomus turgidum (strain DSM 6724 / Z-1310).